A 583-amino-acid chain; its full sequence is Membrane protein insertase YidC (583 aa).

The next 6 helical transmembrane spans lie at 5-25 (SVTGLAIIAVIMIVWLQFMSP), 341-361 (PFAEFIILPVFSWMNGFVSNY), 362-382 (GLIIIIFAFLIKLVTYPLSMA), 427-447 (IGGCLPVVLQMPLLFAMFYVF), 473-493 (FGFAIPMYGSHIAVFPILMAV), and 520-540 (AMMLLFFNNMPAGLGLYYLMF).

Belongs to the OXA1/ALB3/YidC family. Type 1 subfamily. In terms of assembly, interacts with the Sec translocase complex via SecD. Specifically interacts with transmembrane segments of nascent integral membrane proteins during membrane integration.

The protein localises to the cell inner membrane. Functionally, required for the insertion and/or proper folding and/or complex formation of integral membrane proteins into the membrane. Involved in integration of membrane proteins that insert both dependently and independently of the Sec translocase complex, as well as at least some lipoproteins. Aids folding of multispanning membrane proteins. The sequence is that of Membrane protein insertase YidC from Pelodictyon phaeoclathratiforme (strain DSM 5477 / BU-1).